We begin with the raw amino-acid sequence, 533 residues long: 1-aminocyclopropane-1-carboxylate synthase 5 (533 aa).

The residue at position 358 (lysine 358) is an N6-(pyridoxal phosphate)lysine.

Belongs to the class-I pyridoxal-phosphate-dependent aminotransferase family. It depends on pyridoxal 5'-phosphate as a cofactor. Expressed in shoots and leaf blades. Expressed at low levels in leaf sheaths. Expressed in vasculature of roots and shoots.

The enzyme catalyses S-adenosyl-L-methionine = 1-aminocyclopropane-1-carboxylate + S-methyl-5'-thioadenosine + H(+). The protein operates within alkene biosynthesis; ethylene biosynthesis via S-adenosyl-L-methionine; ethylene from S-adenosyl-L-methionine: step 1/2. Its function is as follows. Catalyzes the formation of 1-aminocyclopropane-1-carboxylate, a direct precursor of ethylene in higher plants. This is 1-aminocyclopropane-1-carboxylate synthase 5 from Oryza sativa subsp. japonica (Rice).